Consider the following 400-residue polypeptide: D-alanyl-D-alanine carboxypeptidase DacC (400 aa).

An N-terminal signal peptide occupies residues 1–27 (MTQYSSLLRGLAAGSAFLFLFAPTAFA). The active-site Acyl-ester intermediate is the Ser66. The Proton acceptor role is filled by Lys69. The active site involves Ser132. Position 235 (Lys235) interacts with substrate. The segment at 383–400 (VWDFVMMKFHQWFGSWFS) is required for inner membrane binding.

The protein belongs to the peptidase S11 family.

The protein resides in the cell inner membrane. It carries out the reaction Preferential cleavage: (Ac)2-L-Lys-D-Ala-|-D-Ala. Also transpeptidation of peptidyl-alanyl moieties that are N-acyl substituents of D-alanine.. Its pathway is cell wall biogenesis; peptidoglycan biosynthesis. Functionally, removes C-terminal D-alanyl residues from sugar-peptide cell wall precursors. This Escherichia coli (strain K12) protein is D-alanyl-D-alanine carboxypeptidase DacC (dacC).